We begin with the raw amino-acid sequence, 2315 residues long: Receptor-type tyrosine-protein phosphatase zeta (2315 aa).

The first 24 residues, 1–24 (MRILKRFLACIQLLCVCRLDWANG), serve as a signal peptide directing secretion. The Extracellular segment spans residues 25–1636 (YYRQQRKLVE…LAEGLESEKK (1612 aa)). Positions 36 to 300 (IGWSYTGALN…KFSRQVFSSY (265 aa)) constitute an Alpha-carbonic anhydrase domain. Disulfide bonds link cysteine 56-cysteine 240 and cysteine 133-cysteine 264. Asparagine 105, asparagine 134, asparagine 223, asparagine 232, asparagine 324, and asparagine 381 each carry an N-linked (GlcNAc...) asparagine glycan. The Fibronectin type-III domain occupies 314 to 413 (EPENVQADPE…LIVDMPTDNP (100 aa)). Disordered stretches follow at residues 442–462 (IVNPGRDSATNQIRKKEPQIS) and 477–507 (AKTNRSPTRGSEFSGKGDVPNTSLNSTSQPV). The span at 496 to 507 (PNTSLNSTSQPV) shows a compositional bias: polar residues. Residues asparagine 497, asparagine 501, and asparagine 552 are each glycosylated (N-linked (GlcNAc...) asparagine). O-linked (Xyl...) (chondroitin sulfate) serine glycosylation is present at serine 587. N-linked (GlcNAc...) asparagine glycans are attached at residues asparagine 602 and asparagine 629. The interval 628-650 (RNASEDSTSSGSEESLKDPSMEG) is disordered. Phosphoserine; alternate is present on serine 637. A glycan (O-linked (Xyl...) (chondroitin sulfate) serine; alternate) is linked at serine 637. Position 639 is a phosphoserine (serine 639). The N-linked (GlcNAc...) asparagine glycan is linked to asparagine 677. O-linked (Xyl...) (chondroitin sulfate) serine glycosylation is present at serine 997. 4 N-linked (GlcNAc...) asparagine glycosylation sites follow: asparagine 1017, asparagine 1050, asparagine 1082, and asparagine 1122. Residues 1123–1138 (FSVQPTHTVSQASGDT) show a composition bias toward polar residues. Disordered regions lie at residues 1123–1160 (FSVQPTHTVSQASGDTSLKPVLSANSEPASSDPASSEM), 1397–1523 (KATS…EEND), 1543–1572 (LTSDEESGSGQGTSDSLNENETSTDFSFAD), and 1584–1621 (AGDSEITPGFPQSPTSSVTSENSEVFHVSEAEASNSSH). Positions 1145–1159 (SANSEPASSDPASSE) are enriched in low complexity. The span at 1417-1432 (EDGDTDDDGDDDDDDR) shows a compositional bias: acidic residues. The span at 1450–1465 (ESQEKVMNDSDTHENS) shows a compositional bias: basic and acidic residues. N-linked (GlcNAc...) asparagine glycosylation is present at asparagine 1457. Polar residues-rich tracts occupy residues 1466 to 1479 (LMDQNNPISYSLSE) and 1487 to 1513 (VTSVSSDSQTGMDRSPGKSPSANGLSQ). 2 O-linked (Xyl...) (chondroitin sulfate) serine glycosylation sites follow: serine 1549 and serine 1551. Composition is skewed to polar residues over residues 1554–1572 (GTSDSLNENETSTDFSFAD) and 1593–1606 (FPQSPTSSVTSENS). The N-linked (GlcNAc...) asparagine glycan is linked to asparagine 1562. Asparagine 1618 carries an N-linked (GlcNAc...) asparagine glycan. A helical membrane pass occupies residues 1637-1662 (AVIPLVIVSALTFICLVVLVGILIYW). At 1663–2315 (RKCFQTAHFY…NIAESLESLV (653 aa)) the chain is on the cytoplasmic side. A phosphothreonine mark is found at threonine 1684 and threonine 1687. 2 consecutive Tyrosine-protein phosphatase domains span residues 1717–1992 (FTEE…LVEA) and 2023–2282 (LEKQ…ILSL). Substrate contacts are provided by residues aspartate 1901, 1933–1939 (CSAGVGR), and glutamine 1977. The Phosphocysteine intermediate role is filled by cysteine 1933. Position 2055 is a phosphoserine (serine 2055).

This sequence belongs to the protein-tyrosine phosphatase family. Receptor class 5 subfamily. The carbonic-anhydrase like domain interacts with CNTN1 (contactin). Interacts with PTN. Interaction with PTN promotes formation of homooligomers; oligomerization impairs phosphatase activity. Interacts (via chondroitin sulfate chains) with MDK (via C-terminal); this interaction is inhibited by PTN; this interaction promotes neuronal migration. Specifically expressed in the central nervous system, where it is localized in the Purkinje cell layer of the cerebellum, the dentate gyrus, and the subependymal layer of the anterior horn of the lateral ventricle. Developmentally regulated in the brain.

It localises to the cell membrane. The protein resides in the secreted. The catalysed reaction is O-phospho-L-tyrosyl-[protein] + H2O = L-tyrosyl-[protein] + phosphate. Functionally, protein tyrosine phosphatase that negatively regulates oligodendrocyte precursor proliferation in the embryonic spinal cord. Required for normal differentiation of the precursor cells into mature, fully myelinating oligodendrocytes. May play a role in protecting oligondendrocytes against apoptosis. May play a role in the establishment of contextual memory, probably via the dephosphorylation of proteins that are part of important signaling cascades. The protein is Receptor-type tyrosine-protein phosphatase zeta (PTPRZ1) of Homo sapiens (Human).